The chain runs to 901 residues: Nuclear factor of activated T-cells, cytoplasmic 4 (901 aa).

Positions 1–11 are enriched in acidic residues; sequence MGAASCEDEEL. 2 disordered regions span residues 1-180 and 203-361; these read MGAA…SSWS and NEAA…TEDS. Residues 61-81 are compositionally biased toward pro residues; that stretch reads IPRPPPPRPGMHSPPPRPAPS. Gly residues predominate over residues 96–109; that stretch reads GGPGGTAGGTGGGR. The interval 114–119 is calcineurin-binding; it reads PSIRIT. Positions 114-123 are enriched in low complexity; that stretch reads PSIRITSISP. A compositionally biased stretch (gly residues) spans 151-165; the sequence is GFGGYREAGGQGGGA. Residues 166–180 show a composition bias toward low complexity; sequence FFSPSPGSSSLSSWS. A phosphoserine mark is found at Ser-168, Ser-170, Ser-213, and Ser-217. Residues 213 to 229 form an SP 1 repeat; sequence SPLPSPRASPRPWTPED. Positions 213-293 are 2 approximate SP repeats; the sequence is SPLPSPRASP…LSRRGSLGEE (81 aa). Pro residues-rich tracts occupy residues 215 to 227 and 254 to 263; these read LPSP…PWTP and GPIPASPRPA. The short motif at 268-270 is the Nuclear localization signal element; that stretch reads KRR. Positions 272–288 are enriched in low complexity; sequence SSSGTPSSASPALSRRG. The stretch at 277–293 is one SP 2; approximate repeat; it reads PSSASPALSRRGSLGEE. Phosphoserine is present on residues Ser-289, Ser-334, and Ser-344. Residues 401–582 enclose the RHD domain; the sequence is SALPPLDWPL…VPIECSQRSA (182 aa). The DNA-binding element occupies 430 to 437; the sequence is RAHYETEG. One can recognise an IPT/TIG domain in the interval 586 to 683; it reads PQVEAYSPSA…KRSPTQSFKF (98 aa). Residues 672–674 carry the Nuclear localization signal motif; sequence RRK. Lys-689 participates in a covalent cross-link: Glycyl lysine isopeptide (Lys-Gly) (interchain with G-Cter in SUMO2). Disordered regions lie at residues 697–721 and 791–868; these read SLRG…PRPP and QYGG…GFRD. The segment covering 805–822 has biased composition (pro residues); sequence FSPPAPFRPPLPSSPPLE.

As to quaternary structure, member of the multicomponent NFATC transcription complex that consists of at least two components, a pre-existing cytoplasmic component NFATC2 and an inducible nuclear component NFATC1. Other NFAT proteins, such as NFATC4, NFATC3, or members of the activating protein-1 (AP-1) family and MAF can also bind the complex. NFAT proteins can bind DNA as monomers or dimers. Component of a promoter-binding complex composed of STAT3, NFATC3 and NFATC4; complex formation is enhanced by calcineurin. Interacts with CREBBP; this interaction potentiates transcription activation. Interacts with MAPK8/JNK1 and MAPK9/JNK2. Interacts with GATA4 (via the second Zn finger). Interacts (via N-terminus) with IRAK1 (via C-terminus). Interacts with RPS6KA3. Interacts with HOMER1, HOMER2 and HOMER3; this interaction competes with calcineurin/PPP3CA-binding and hence prevents NFATC4 dephosphorylation and activation. Interacts with ESR1 and ESR2; this interaction decreases NFATC4 transcriptional activity. Interacts with MTOR and MAPK7/ERK5. Interacts with TRIM17; this interaction prevents NFATC3 nuclear localization. Interacts with TCF25 (via C-terminus); the interaction leads to suppression of NFATC4 transcription factor activity and is reduced following stimulation with angiotensin-2. Phosphorylated by NFATC-kinases; dephosphorylated by calcineurin/PPP3CA. Phosphorylated on Ser-168 and Ser-170 by MTOR, IRAK1, MAPK7/ERK5 and MAPK14/p38, on Ser-213 and Ser-217 by MAPK8 and MAPK9, and on Ser-289 and Ser-344 by RPS6KA3. Phosphorylated by GSK3B; this phosphorylation markedly increases NFATC4 ubiquitination. Phosphorylation by MAPK8/JNK1, MAPK9/JNK2 and RPS6KA3 may stimulate NFATC4 transcriptional activity. Phosphorylation at Ser-168 and Ser-170 is stimulated by UV irradiation. In terms of processing, ubiquitinated, leading to degradation by the proteasome. Ubiquitination may be stimulated by GSK3B-dependent phosphorylation. Polyubiquitin linkage mainly occurs through 'Lys-48'. Expressed in heart (at protein level).

The protein resides in the cytoplasm. It localises to the nucleus. Ca(2+)-regulated transcription factor that is involved in several processes, including the development and function of the immune, cardiovascular, musculoskeletal, and nervous systems. Involved in T-cell activation, stimulating the transcription of cytokine genes, including that of IL2 and IL4. Along with NFATC3, involved in embryonic heart development. Following JAK/STAT signaling activation and as part of a complex with NFATC3 and STAT3, binds to the alpha-beta E4 promoter region of CRYAB and activates transcription in cardiomyocytes. Involved in mitochondrial energy metabolism required for cardiac morphogenesis and function. Transactivates many genes involved in heart physiology. Along with GATA4, binds to and activates NPPB/BNP promoter. Activates NPPA/ANP/ANF and MYH7/beta-MHC transcription. Binds to and transactivates AGTR2 gene promoter. Involved in the regulation of adult hippocampal neurogenesis. Involved in BDNF-driven pro-survival signaling in hippocampal adult-born neurons. Involved in the formation of long-term spatial memory and long-term potentiation. In cochlear nucleus neurons, may play a role in deafferentation-induced apoptosis during a developmental critical period when auditory neurons depend on afferent input for survival. Binds to and activates the BACE1/Beta-secretase 1 promoter, hence may regulate the proteolytic processing of the amyloid precursor protein (APP). Plays a role in adipocyte differentiation. May be involved in myoblast differentiation into myotubes. Binds the consensus DNA sequence 5'-GGAAAAT-3'. In the presence of CREBBP, activates TNF transcription. Binds to PPARG gene promoter and regulates its activity. Binds to PPARG and REG3G gene promoters. In Rattus norvegicus (Rat), this protein is Nuclear factor of activated T-cells, cytoplasmic 4 (Nfatc4).